The chain runs to 351 residues: 3-dehydroquinate synthase (351 aa).

Residues 60–65 (DGEEYK), 94–98 (GVISD), 118–119 (TT), Lys-131, Lys-140, and 158–161 (FLKT) each bind NAD(+). Residues Glu-173, His-239, and His-256 each coordinate Zn(2+).

Belongs to the sugar phosphate cyclases superfamily. Dehydroquinate synthase family. The cofactor is Co(2+). Requires Zn(2+) as cofactor. It depends on NAD(+) as a cofactor.

The protein resides in the cytoplasm. The catalysed reaction is 7-phospho-2-dehydro-3-deoxy-D-arabino-heptonate = 3-dehydroquinate + phosphate. The protein operates within metabolic intermediate biosynthesis; chorismate biosynthesis; chorismate from D-erythrose 4-phosphate and phosphoenolpyruvate: step 2/7. Catalyzes the conversion of 3-deoxy-D-arabino-heptulosonate 7-phosphate (DAHP) to dehydroquinate (DHQ). The chain is 3-dehydroquinate synthase from Campylobacter jejuni subsp. jejuni serotype O:6 (strain 81116 / NCTC 11828).